A 191-amino-acid chain; its full sequence is Cathelicidin-related peptide Oh-Cath (191 aa).

The first 22 residues, 1–22, serve as a signal peptide directing secretion; sequence MEGFFWKTLLVVGALAIGGTSS. A propeptide spanning residues 23 to 161 is cleaved from the precursor; it reads LPHKPLTYEE…DQPRRVKRFK (139 aa). Disulfide bonds link cysteine 81–cysteine 92 and cysteine 103–cysteine 120. Acidic residues predominate over residues 125 to 151; the sequence is EEEEQKQEEGNEEEKEVEKEEKEEDEK. Residues 125-154 are disordered; that stretch reads EEEEQKQEEGNEEEKEVEKEEKEEDEKDQP.

Belongs to the cathelicidin family. In terms of tissue distribution, expressed by the venom gland.

It is found in the secreted. It localises to the target cell membrane. Functionally, potent antimicrobial peptide against Gram-negative (MIC=0.25 ug/ml against E.coli ATCC 25922, MIC=0.5 ug/ml against P.aeruginosa) and Gram-positive bacteria (MIC=64 ug/ml against E.faecalis, MIC=64 ug/ml against S.aureus). Adopts an amphipathic alpha helical conformation, that may allow to partition into the target membrane. Low hemolytic activities have been observed on mammalian cells. The sequence is that of Cathelicidin-related peptide Oh-Cath from Ophiophagus hannah (King cobra).